Reading from the N-terminus, the 146-residue chain is Large ribosomal subunit protein uL15 (146 aa).

The disordered stretch occupies residues 1–57; sequence MKLFELQPAPGSKKLPKRKGRGHGTGNGKTAGRGHKGQNARSGGGVRPGFEGGQMPL. Residues 42-52 are compositionally biased toward gly residues; it reads SGGGVRPGFEG.

The protein belongs to the universal ribosomal protein uL15 family. As to quaternary structure, part of the 50S ribosomal subunit.

In terms of biological role, binds to the 23S rRNA. The protein is Large ribosomal subunit protein uL15 of Acetivibrio thermocellus (strain ATCC 27405 / DSM 1237 / JCM 9322 / NBRC 103400 / NCIMB 10682 / NRRL B-4536 / VPI 7372) (Clostridium thermocellum).